Consider the following 432-residue polypeptide: GTPase Obg (432 aa).

Residues 1-159 form the Obg domain; sequence MKFIDTAKFT…YEVKAELKVL (159 aa). Positions 160 to 332 constitute an OBG-type G domain; that stretch reads ADVGFVGLPN…LLLKIAKELE (173 aa). GTP contacts are provided by residues 166–173, 191–195, 213–216, 284–287, and 313–315; these read GLPNAGKS, FTTLN, DLPG, NKMD, and SGL. Mg(2+)-binding residues include Ser173 and Thr193. The OCT domain occupies 354-432; that stretch reads RLEEDEEDIQ…VFEYELEWMD (79 aa).

It belongs to the TRAFAC class OBG-HflX-like GTPase superfamily. OBG GTPase family. In terms of assembly, monomer. The cofactor is Mg(2+).

It localises to the cytoplasm. An essential GTPase which binds GTP, GDP and possibly (p)ppGpp with moderate affinity, with high nucleotide exchange rates and a fairly low GTP hydrolysis rate. Plays a role in control of the cell cycle, stress response, ribosome biogenesis and in those bacteria that undergo differentiation, in morphogenesis control. The chain is GTPase Obg from Mesoplasma florum (strain ATCC 33453 / NBRC 100688 / NCTC 11704 / L1) (Acholeplasma florum).